A 153-amino-acid polypeptide reads, in one-letter code: Endoribonuclease RegB (153 aa).

Its activity is regulated as follows. Activity is stimulated 10- to 100-fold by host ribosomal protein S1, which also helps confer substrate choice. Functionally, essential to the early nucleolytic processing of a number of T4 messenger RNAs. Specifically cleaves after the GG dinucleotide GGAG within consensus 5'-GGAGRAYARAA-3' (R is a purine and Y is a pyrimidine) sequences found mainly in translation initiation sites. The chain is Endoribonuclease RegB (regB) from Enterobacteria phage T4 (Bacteriophage T4).